A 217-amino-acid chain; its full sequence is Adenylate kinase (217 aa).

10 to 15 (GSGKGT) provides a ligand contact to ATP. Residues 30 to 59 (STGDLLRAAVAAGSELGKQAKAAMDAGELV) form an NMP region. AMP contacts are provided by residues Thr31, Arg36, 57 to 59 (ELV), 85 to 88 (GFPR), and Gln92. The tract at residues 126 to 164 (GRRTCQACGAIYNIYFSPPEVDHRCDKCNSDQLVQRSDD) is LID. Arg127 serves as a coordination point for ATP. Zn(2+) is bound by residues Cys130 and Cys133. An ATP-binding site is contributed by 136 to 137 (IY). Positions 150 and 153 each coordinate Zn(2+). AMP contacts are provided by Arg161 and Arg172. Asp200 provides a ligand contact to ATP.

It belongs to the adenylate kinase family. In terms of assembly, monomer.

It localises to the cytoplasm. It catalyses the reaction AMP + ATP = 2 ADP. Its pathway is purine metabolism; AMP biosynthesis via salvage pathway; AMP from ADP: step 1/1. Its function is as follows. Catalyzes the reversible transfer of the terminal phosphate group between ATP and AMP. Plays an important role in cellular energy homeostasis and in adenine nucleotide metabolism. The protein is Adenylate kinase of Nitrosococcus oceani (strain ATCC 19707 / BCRC 17464 / JCM 30415 / NCIMB 11848 / C-107).